A 116-amino-acid chain; its full sequence is Ribonuclease P protein component (116 aa).

Belongs to the RnpA family. As to quaternary structure, consists of a catalytic RNA component (M1 or rnpB) and a protein subunit.

It catalyses the reaction Endonucleolytic cleavage of RNA, removing 5'-extranucleotides from tRNA precursor.. RNaseP catalyzes the removal of the 5'-leader sequence from pre-tRNA to produce the mature 5'-terminus. It can also cleave other RNA substrates such as 4.5S RNA. The protein component plays an auxiliary but essential role in vivo by binding to the 5'-leader sequence and broadening the substrate specificity of the ribozyme. The sequence is that of Ribonuclease P protein component from Lachnoclostridium phytofermentans (strain ATCC 700394 / DSM 18823 / ISDg) (Clostridium phytofermentans).